The primary structure comprises 93 residues: Small ribosomal subunit protein uS19 (93 aa).

Belongs to the universal ribosomal protein uS19 family.

In terms of biological role, protein S19 forms a complex with S13 that binds strongly to the 16S ribosomal RNA. In Nocardia farcinica (strain IFM 10152), this protein is Small ribosomal subunit protein uS19.